A 428-amino-acid chain; its full sequence is Serine hydroxymethyltransferase (428 aa).

Residues Leu-127 and 131–133 (GHL) contribute to the (6S)-5,6,7,8-tetrahydrofolate site. N6-(pyridoxal phosphate)lysine is present on Lys-236.

It belongs to the SHMT family. As to quaternary structure, homodimer. Pyridoxal 5'-phosphate serves as cofactor.

The protein localises to the cytoplasm. The enzyme catalyses (6R)-5,10-methylene-5,6,7,8-tetrahydrofolate + glycine + H2O = (6S)-5,6,7,8-tetrahydrofolate + L-serine. The protein operates within one-carbon metabolism; tetrahydrofolate interconversion. It functions in the pathway amino-acid biosynthesis; glycine biosynthesis; glycine from L-serine: step 1/1. In terms of biological role, catalyzes the reversible interconversion of serine and glycine with tetrahydrofolate (THF) serving as the one-carbon carrier. This reaction serves as the major source of one-carbon groups required for the biosynthesis of purines, thymidylate, methionine, and other important biomolecules. Also exhibits THF-independent aldolase activity toward beta-hydroxyamino acids, producing glycine and aldehydes, via a retro-aldol mechanism. This chain is Serine hydroxymethyltransferase, found in Tropheryma whipplei (strain TW08/27) (Whipple's bacillus).